The primary structure comprises 162 residues: Protein A49 (162 aa).

This sequence belongs to the poxviridae A49 protein family.

This chain is Protein A49, found in Homo sapiens (Human).